A 66-amino-acid chain; its full sequence is Large ribosomal subunit protein bL33 (66 aa).

Belongs to the bacterial ribosomal protein bL33 family.

In Synechococcus sp. (strain CC9902), this protein is Large ribosomal subunit protein bL33.